The following is a 413-amino-acid chain: Multifunctional CCA protein (413 aa).

Positions 8 and 11 each coordinate ATP. The CTP site is built by Gly8 and Arg11. Mg(2+) contacts are provided by Asp21 and Asp23. ATP is bound by residues Arg91, Arg137, and Arg140. The CTP site is built by Arg91, Arg137, and Arg140. In terms of domain architecture, HD spans 228–329 (TGIHTLMVLA…IKIFDKADLW (102 aa)).

It belongs to the tRNA nucleotidyltransferase/poly(A) polymerase family. Bacterial CCA-adding enzyme type 1 subfamily. Monomer. Can also form homodimers and oligomers. It depends on Mg(2+) as a cofactor. Ni(2+) is required as a cofactor.

The enzyme catalyses a tRNA precursor + 2 CTP + ATP = a tRNA with a 3' CCA end + 3 diphosphate. The catalysed reaction is a tRNA with a 3' CCA end + 2 CTP + ATP = a tRNA with a 3' CCACCA end + 3 diphosphate. Catalyzes the addition and repair of the essential 3'-terminal CCA sequence in tRNAs without using a nucleic acid template. Adds these three nucleotides in the order of C, C, and A to the tRNA nucleotide-73, using CTP and ATP as substrates and producing inorganic pyrophosphate. tRNA 3'-terminal CCA addition is required both for tRNA processing and repair. Also involved in tRNA surveillance by mediating tandem CCA addition to generate a CCACCA at the 3' terminus of unstable tRNAs. While stable tRNAs receive only 3'-terminal CCA, unstable tRNAs are marked with CCACCA and rapidly degraded. This is Multifunctional CCA protein from Shewanella woodyi (strain ATCC 51908 / MS32).